A 430-amino-acid polypeptide reads, in one-letter code: Histidine--tRNA ligase (430 aa).

This sequence belongs to the class-II aminoacyl-tRNA synthetase family. Homodimer.

The protein localises to the cytoplasm. It catalyses the reaction tRNA(His) + L-histidine + ATP = L-histidyl-tRNA(His) + AMP + diphosphate + H(+). The chain is Histidine--tRNA ligase from Lactococcus lactis subsp. lactis (strain IL1403) (Streptococcus lactis).